The sequence spans 793 residues: DNA mismatch repair protein MutS (793 aa).

ATP is bound at residue 589–596 (GPNMSGKS).

The protein belongs to the DNA mismatch repair MutS family.

In terms of biological role, this protein is involved in the repair of mismatches in DNA. It is possible that it carries out the mismatch recognition step. This protein has a weak ATPase activity. The chain is DNA mismatch repair protein MutS from Thermotoga sp. (strain RQ2).